The sequence spans 292 residues: GTP cyclohydrolase FolE2 (292 aa).

The protein belongs to the GTP cyclohydrolase IV family.

The catalysed reaction is GTP + H2O = 7,8-dihydroneopterin 3'-triphosphate + formate + H(+). The protein operates within cofactor biosynthesis; 7,8-dihydroneopterin triphosphate biosynthesis; 7,8-dihydroneopterin triphosphate from GTP: step 1/1. In terms of biological role, converts GTP to 7,8-dihydroneopterin triphosphate. This is GTP cyclohydrolase FolE2 from Staphylococcus carnosus (strain TM300).